A 97-amino-acid polypeptide reads, in one-letter code: MEQAPEDQGPQREPYNEWTLELLEELKREAVRHFPRPWLHSLGQYIYETYGDTWAGVEAIIRILQQLLFIHFRIGCQHSRIGIIQQRRARRNGASRS.

Residues 1 to 42 are homooligomerization; that stretch reads MEQAPEDQGPQREPYNEWTLELLEELKREAVRHFPRPWLHSL. Phosphoserine; by host is present on residues serine 79, serine 95, and serine 97.

This sequence belongs to the HIV-1 VPR protein family. In terms of assembly, homooligomer, may form homodimer. Interacts with p6-gag region of the Pr55 Gag precursor protein through a (Leu-X-X)4 motif near the C-terminus of the P6gag protein. Interacts with host UNG. May interact with host RAD23A/HHR23A. Interacts with host VPRBP/DCAF1, leading to hijack the CUL4A-RBX1-DDB1-DCAF1/VPRBP complex, mediating ubiquitination of host proteins such as TERT and ZGPAT and arrest of the cell cycle in G2 phase. Phosphorylated on several residues by host. These phosphorylations regulate VPR activity for the nuclear import of the HIV-1 pre-integration complex.

Its subcellular location is the virion. The protein localises to the host nucleus. The protein resides in the host extracellular space. Functionally, during virus replication, may deplete host UNG protein, and incude G2-M cell cycle arrest. Acts by targeting specific host proteins for degradation by the 26S proteasome, through association with the cellular CUL4A-DDB1 E3 ligase complex by direct interaction with host VPRPB/DCAF-1. Cell cycle arrest reportedly occurs within hours of infection and is not blocked by antiviral agents, suggesting that it is initiated by the VPR carried into the virion. Additionally, VPR induces apoptosis in a cell cycle dependent manner suggesting that these two effects are mechanistically linked. Detected in the serum and cerebrospinal fluid of AIDS patient, VPR may also induce cell death to bystander cells. During virus entry, plays a role in the transport of the viral pre-integration (PIC) complex to the host nucleus. This function is crucial for viral infection of non-dividing macrophages. May act directly at the nuclear pore complex, by binding nucleoporins phenylalanine-glycine (FG)-repeat regions. This is Protein Vpr from Human immunodeficiency virus type 1 group M subtype B (isolate ARV2/SF2) (HIV-1).